Reading from the N-terminus, the 476-residue chain is Aspartyl/glutamyl-tRNA(Asn/Gln) amidotransferase subunit B (476 aa).

This sequence belongs to the GatB/GatE family. GatB subfamily. In terms of assembly, heterotrimer of A, B and C subunits.

It catalyses the reaction L-glutamyl-tRNA(Gln) + L-glutamine + ATP + H2O = L-glutaminyl-tRNA(Gln) + L-glutamate + ADP + phosphate + H(+). The catalysed reaction is L-aspartyl-tRNA(Asn) + L-glutamine + ATP + H2O = L-asparaginyl-tRNA(Asn) + L-glutamate + ADP + phosphate + 2 H(+). Functionally, allows the formation of correctly charged Asn-tRNA(Asn) or Gln-tRNA(Gln) through the transamidation of misacylated Asp-tRNA(Asn) or Glu-tRNA(Gln) in organisms which lack either or both of asparaginyl-tRNA or glutaminyl-tRNA synthetases. The reaction takes place in the presence of glutamine and ATP through an activated phospho-Asp-tRNA(Asn) or phospho-Glu-tRNA(Gln). This is Aspartyl/glutamyl-tRNA(Asn/Gln) amidotransferase subunit B from Vesicomyosocius okutanii subsp. Calyptogena okutanii (strain HA).